The chain runs to 90 residues: Defensin-like protein 193 (90 aa).

An N-terminal signal peptide occupies residues 1 to 27 (MAMKSVSTLAVFAILFLVIVEMPEIKA). Disulfide bonds link cysteine 32–cysteine 86, cysteine 45–cysteine 69, cysteine 54–cysteine 81, and cysteine 58–cysteine 83.

The protein belongs to the DEFL family. Protease inhibitor I18 (RTI/MTI-2) subfamily.

It is found in the secreted. This Arabidopsis thaliana (Mouse-ear cress) protein is Defensin-like protein 193 (ATTI2).